Here is a 256-residue protein sequence, read N- to C-terminus: Thiazole synthase (256 aa).

Residue lysine 95 is the Schiff-base intermediate with DXP of the active site. 1-deoxy-D-xylulose 5-phosphate-binding positions include glycine 156, 182–183 (AG), and 204–205 (NT).

The protein belongs to the ThiG family. Homotetramer. Forms heterodimers with either ThiH or ThiS.

Its subcellular location is the cytoplasm. It carries out the reaction [ThiS sulfur-carrier protein]-C-terminal-Gly-aminoethanethioate + 2-iminoacetate + 1-deoxy-D-xylulose 5-phosphate = [ThiS sulfur-carrier protein]-C-terminal Gly-Gly + 2-[(2R,5Z)-2-carboxy-4-methylthiazol-5(2H)-ylidene]ethyl phosphate + 2 H2O + H(+). The protein operates within cofactor biosynthesis; thiamine diphosphate biosynthesis. Its function is as follows. Catalyzes the rearrangement of 1-deoxy-D-xylulose 5-phosphate (DXP) to produce the thiazole phosphate moiety of thiamine. Sulfur is provided by the thiocarboxylate moiety of the carrier protein ThiS. In vitro, sulfur can be provided by H(2)S. In Salmonella choleraesuis (strain SC-B67), this protein is Thiazole synthase.